Here is a 421-residue protein sequence, read N- to C-terminus: MANALIEDLKWRGLIYQQTDEEGIEELLNKEQVTLYCGADPTADSLHIGHLLPFLTLRRFQEHGHRPIVLIGGGTGMIGDPSGKSEERVLQTESQVEANVKGLSNQMHRLFEFGSDKGAKLVNNKDWLGQISLISFLRDYGKHVGVNYMLGKDSIQTRLEHGISYTEFTYTILQAIDFGYLNRELNCKIQVGGSDQWGNITSGIELMRRMYGQTEAYGLTIPLVTKSDGKKFGKSESGAVWLDPEKTSPYEFYQFWINQSDEDVIKFLKYFTFLEKEEINRLEQSKNEAPHLREAQKALAENVTKFIHGEAALKDAIRISKALFSGDLKSLSAKELKEGFKDVPQVTLSTKTTNIVEALIETGIASSKRQAREDVNNGAIYINGERQQSVDYELSSKDLIEDEITIIRRGKKKYFMVNYQS.

Residue Tyr36 coordinates L-tyrosine. A 'HIGH' region motif is present at residues 41–50 (PTADSLHIGH). The L-tyrosine site is built by Tyr170 and Gln174. The 'KMSKS' region signature appears at 231 to 235 (KFGKS). Lys234 serves as a coordination point for ATP. The S4 RNA-binding domain occupies 353–420 (TNIVEALIET…KKKYFMVNYQ (68 aa)).

Belongs to the class-I aminoacyl-tRNA synthetase family. TyrS type 1 subfamily. Homodimer.

It localises to the cytoplasm. The catalysed reaction is tRNA(Tyr) + L-tyrosine + ATP = L-tyrosyl-tRNA(Tyr) + AMP + diphosphate + H(+). Catalyzes the attachment of tyrosine to tRNA(Tyr) in a two-step reaction: tyrosine is first activated by ATP to form Tyr-AMP and then transferred to the acceptor end of tRNA(Tyr). The polypeptide is Tyrosine--tRNA ligase (Staphylococcus epidermidis (strain ATCC 35984 / DSM 28319 / BCRC 17069 / CCUG 31568 / BM 3577 / RP62A)).